Here is a 116-residue protein sequence, read N- to C-terminus: Putative pterin-4-alpha-carbinolamine dehydratase 1 (116 aa).

Belongs to the pterin-4-alpha-carbinolamine dehydratase family.

The enzyme catalyses (4aS,6R)-4a-hydroxy-L-erythro-5,6,7,8-tetrahydrobiopterin = (6R)-L-erythro-6,7-dihydrobiopterin + H2O. This is Putative pterin-4-alpha-carbinolamine dehydratase 1 from Cupriavidus pinatubonensis (strain JMP 134 / LMG 1197) (Cupriavidus necator (strain JMP 134)).